Consider the following 492-residue polypeptide: Cytochrome P450 2A12 (492 aa).

C437 provides a ligand contact to heme.

It belongs to the cytochrome P450 family. Heme serves as cofactor. As to expression, liver.

The protein localises to the endoplasmic reticulum membrane. It localises to the microsome membrane. The catalysed reaction is an organic molecule + reduced [NADPH--hemoprotein reductase] + O2 = an alcohol + oxidized [NADPH--hemoprotein reductase] + H2O + H(+). Highly active in the 7-alpha-hydroxylation of testosterone. This chain is Cytochrome P450 2A12 (Cyp2a12), found in Mus musculus (Mouse).